A 366-amino-acid polypeptide reads, in one-letter code: MKPVDSLSGLSEHLSVHALCRRFGAFTALDQASLSIRKGEFVCLLGPSGCGKTTLLRLIAGLDLPDAGAIRLSGRDITRTAPAKRDYGIVFQSYALFPNLTVADNIAYGLTPRRDKAGHAHRVRELLDMVGLPGSEGKYPSQLSGGQQQRVALARALATSPGLLLLDEPLSALDARVRDKLREELKGLQRRLGVTTMMVTHDQEEALSIADRVVVMNAGRIEQTGTPAEIYRSPASRFVAEFVGDANWLPAERRGGREAAVGGCVLSLARDLPDAEALTLFIRPEDVIVKPRWAPAANTLLARVEDVSFGGAMTRLRLRPEGMPGLILRAEICPSMLNRQPLVPGEIVPVELPAAQLRAYPGEAAC.

The region spanning 14-243 is the ABC transporter domain; that stretch reads LSVHALCRRF…PASRFVAEFV (230 aa). ATP is bound at residue 46-53; it reads GPSGCGKT.

The protein belongs to the ABC transporter superfamily. Sulfate/tungstate importer (TC 3.A.1.6) family. The complex is composed of two ATP-binding proteins (CysA), two transmembrane proteins (CysT and CysW) and a solute-binding protein (CysP).

It localises to the cell inner membrane. It carries out the reaction sulfate(out) + ATP + H2O = sulfate(in) + ADP + phosphate + H(+). The enzyme catalyses thiosulfate(out) + ATP + H2O = thiosulfate(in) + ADP + phosphate + H(+). Part of the ABC transporter complex CysAWTP involved in sulfate/thiosulfate import. Responsible for energy coupling to the transport system. The protein is Sulfate/thiosulfate import ATP-binding protein CysA 2 of Chromobacterium violaceum (strain ATCC 12472 / DSM 30191 / JCM 1249 / CCUG 213 / NBRC 12614 / NCIMB 9131 / NCTC 9757 / MK).